A 365-amino-acid polypeptide reads, in one-letter code: tRNA/tmRNA (uracil-C(5))-methyltransferase (365 aa).

Positions 189, 217, 222, 238, and 298 each coordinate S-adenosyl-L-methionine. Residue Cys323 is the Nucleophile of the active site. The Proton acceptor role is filled by Glu357.

It belongs to the class I-like SAM-binding methyltransferase superfamily. RNA M5U methyltransferase family. TrmA subfamily.

It carries out the reaction uridine(54) in tRNA + S-adenosyl-L-methionine = 5-methyluridine(54) in tRNA + S-adenosyl-L-homocysteine + H(+). The enzyme catalyses uridine(341) in tmRNA + S-adenosyl-L-methionine = 5-methyluridine(341) in tmRNA + S-adenosyl-L-homocysteine + H(+). Its function is as follows. Dual-specificity methyltransferase that catalyzes the formation of 5-methyluridine at position 54 (m5U54) in all tRNAs, and that of position 341 (m5U341) in tmRNA (transfer-mRNA). This is tRNA/tmRNA (uracil-C(5))-methyltransferase from Pseudoalteromonas atlantica (strain T6c / ATCC BAA-1087).